Reading from the N-terminus, the 151-residue chain is MEEAEKAKRRSIELLNETRNCAYSSFVALAEALNISLNEDMKNMAIGFAGGISGSGHICGALWGSIAAASLYTMKMMGDRRKIQNPLERYMPVYAKCAGIYRKFVELNGSPNCGDLNPNLDLVSVEQRRKCMEIVSRAVEITLSSLKDQKT.

The N-terminal stretch at 1 to 32 is a signal peptide; sequence MEEAEKAKRRSIELLNETRNCAYSSFVALAEA. The chain crosses the membrane as a helical span at residues 45 to 67; the sequence is AIGFAGGISGSGHICGALWGSIA.

It is found in the membrane. This is an uncharacterized protein from Archaeoglobus fulgidus (strain ATCC 49558 / DSM 4304 / JCM 9628 / NBRC 100126 / VC-16).